The sequence spans 282 residues: Acetyl-coenzyme A carboxylase carboxyl transferase subunit beta (282 aa).

The 255-residue stretch at 28–282 (IMTKCPSCRT…TKILDIHHVS (255 aa)) folds into the CoA carboxyltransferase N-terminal domain. Zn(2+) is bound by residues Cys-32, Cys-35, Cys-51, and Cys-54. The C4-type zinc-finger motif lies at 32–54 (CPSCRTIMYTKELKKNLYVCDSC).

Belongs to the AccD/PCCB family. As to quaternary structure, acetyl-CoA carboxylase is a heterohexamer composed of biotin carboxyl carrier protein (AccB), biotin carboxylase (AccC) and two subunits each of ACCase subunit alpha (AccA) and ACCase subunit beta (AccD). It depends on Zn(2+) as a cofactor.

It localises to the cytoplasm. The catalysed reaction is N(6)-carboxybiotinyl-L-lysyl-[protein] + acetyl-CoA = N(6)-biotinyl-L-lysyl-[protein] + malonyl-CoA. The protein operates within lipid metabolism; malonyl-CoA biosynthesis; malonyl-CoA from acetyl-CoA: step 1/1. Its function is as follows. Component of the acetyl coenzyme A carboxylase (ACC) complex. Biotin carboxylase (BC) catalyzes the carboxylation of biotin on its carrier protein (BCCP) and then the CO(2) group is transferred by the transcarboxylase to acetyl-CoA to form malonyl-CoA. This is Acetyl-coenzyme A carboxylase carboxyl transferase subunit beta from Halalkalibacterium halodurans (strain ATCC BAA-125 / DSM 18197 / FERM 7344 / JCM 9153 / C-125) (Bacillus halodurans).